A 263-amino-acid chain; its full sequence is tRNA pseudouridine synthase A (263 aa).

Aspartate 54 acts as the Nucleophile in catalysis. Tyrosine 113 contributes to the substrate binding site.

This sequence belongs to the tRNA pseudouridine synthase TruA family. In terms of assembly, homodimer.

The catalysed reaction is uridine(38/39/40) in tRNA = pseudouridine(38/39/40) in tRNA. Its function is as follows. Formation of pseudouridine at positions 38, 39 and 40 in the anticodon stem and loop of transfer RNAs. The chain is tRNA pseudouridine synthase A from Lactobacillus helveticus (strain DPC 4571).